Here is a 210-residue protein sequence, read N- to C-terminus: MRVKICGITQPQQSIAIASLGATALGFICVPNSPRYVTTSQIRAAVAELPADIDTIGVFANSSIVEISQIVVDSGLTGVQLHGDELPDFCYQLRQALPNVEIIKALRIRSLEHLGTAADYTKYVDTLLLDAYHPEQLGGTGKTLDWKILEQFNPNCPWFLAGGLTADNIVEALSQVSPSGVDLSSGVERAPGDKDLDKVSKLFEKLGSRE.

Belongs to the TrpF family.

The catalysed reaction is N-(5-phospho-beta-D-ribosyl)anthranilate = 1-(2-carboxyphenylamino)-1-deoxy-D-ribulose 5-phosphate. It participates in amino-acid biosynthesis; L-tryptophan biosynthesis; L-tryptophan from chorismate: step 3/5. The chain is N-(5'-phosphoribosyl)anthranilate isomerase from Nostoc punctiforme (strain ATCC 29133 / PCC 73102).